The sequence spans 1353 residues: Protein timeless homolog (1353 aa).

Disordered regions lie at residues 798–825 (VAED…EEEV), 1150–1291 (KPTR…LEED), and 1306–1335 (GGSI…DPFT). Acidic residues predominate over residues 802-825 (RAEDPDEEDPAEPYDSEQEEEEEV). Basic and acidic residues-rich tracts occupy residues 1150 to 1160 (KPTRQVERHLE) and 1168 to 1182 (ERSK…KFDD). Acidic residues-rich tracts occupy residues 1183–1206 (FLND…EEEE) and 1217–1226 (DSEDEEEHIE). A compositionally biased stretch (basic and acidic residues) spans 1227-1239 (QEEAQKKLEKVAE). Composition is skewed to acidic residues over residues 1261-1273 (DSSD…DSAE), 1282-1291 (AEDDSDLEED), and 1323-1332 (EEREDDDDED).

It belongs to the timeless family. As to quaternary structure, associates with the cohesin complex. Interacts with smc-1, smc-3, scc-1 and scc-3.

The protein localises to the nucleus. Its function is as follows. Plays an important role in chromosome cohesion during both mitosis and meiosis. In prophase of meiosis, it is involved in the formation of the synaptonemal complex (SC) and specifically, in the diplotene and diakinesis phases of prophase, it stabilizes the association of homologous chromosomes during synapsis and sister chromatid cohesion. It regulates cohesin subunits to promote meiotic chromosome cohesion and localizes non-SMC (structural maintenance of chromosome) cohesin subunits to chromatin prior to or during pre-meiotic S phase. Implicated in influencing either the stability or loading of meiotic-specific cohesin subunit, rec8. Controls cell cycle exit and cell fusion to prevent the premature differentiation into adult cells. Specifically, regulates hypodermal seam cell identity. The polypeptide is Protein timeless homolog (Caenorhabditis elegans).